The following is a 156-amino-acid chain: Small ribosomal subunit protein uS7 (156 aa).

It belongs to the universal ribosomal protein uS7 family. In terms of assembly, part of the 30S ribosomal subunit. Contacts proteins S9 and S11.

One of the primary rRNA binding proteins, it binds directly to 16S rRNA where it nucleates assembly of the head domain of the 30S subunit. Is located at the subunit interface close to the decoding center, probably blocks exit of the E-site tRNA. The sequence is that of Small ribosomal subunit protein uS7 from Bifidobacterium longum (strain NCC 2705).